The primary structure comprises 839 residues: Molybdenum cofactor sulfurase (839 aa).

Lysine 237 carries the N6-(pyridoxal phosphate)lysine modification. Cysteine 401 is an active-site residue. The span at 651-662 shows a compositional bias: polar residues; that stretch reads DQNYSQKQSPSM. The tract at residues 651–678 is disordered; it reads DQNYSQKQSPSMPGSFPQAPSSPDPYPT. Residues 656 to 834 enclose the MOSC domain; the sequence is QKQSPSMPGS…IMVGDAVTPS (179 aa).

Belongs to the class-V pyridoxal-phosphate-dependent aminotransferase family. MOCOS subfamily. The cofactor is pyridoxal 5'-phosphate.

The catalysed reaction is Mo-molybdopterin + L-cysteine + AH2 = thio-Mo-molybdopterin + L-alanine + A + H2O. Its pathway is cofactor biosynthesis; molybdopterin biosynthesis. In terms of biological role, sulfurates the molybdenum cofactor. Sulfation of molybdenum is essential for xanthine dehydrogenase (XDH) and aldehyde oxidase (ADO) enzymes in which molybdenum cofactor is liganded by 1 oxygen and 1 sulfur atom in active form. The polypeptide is Molybdenum cofactor sulfurase (Emericella nidulans (strain FGSC A4 / ATCC 38163 / CBS 112.46 / NRRL 194 / M139) (Aspergillus nidulans)).